The primary structure comprises 417 residues: Serine hydroxymethyltransferase (417 aa).

Residues Leu120 and Gly124–Leu126 contribute to the (6S)-5,6,7,8-tetrahydrofolate site. Residue Lys229 is modified to N6-(pyridoxal phosphate)lysine. A (6S)-5,6,7,8-tetrahydrofolate-binding site is contributed by Ser354 to Phe356.

Belongs to the SHMT family. Homodimer. Pyridoxal 5'-phosphate is required as a cofactor.

The protein localises to the cytoplasm. It catalyses the reaction (6R)-5,10-methylene-5,6,7,8-tetrahydrofolate + glycine + H2O = (6S)-5,6,7,8-tetrahydrofolate + L-serine. It participates in one-carbon metabolism; tetrahydrofolate interconversion. It functions in the pathway amino-acid biosynthesis; glycine biosynthesis; glycine from L-serine: step 1/1. Its function is as follows. Catalyzes the reversible interconversion of serine and glycine with tetrahydrofolate (THF) serving as the one-carbon carrier. This reaction serves as the major source of one-carbon groups required for the biosynthesis of purines, thymidylate, methionine, and other important biomolecules. Also exhibits THF-independent aldolase activity toward beta-hydroxyamino acids, producing glycine and aldehydes, via a retro-aldol mechanism. The polypeptide is Serine hydroxymethyltransferase (Acinetobacter baylyi (strain ATCC 33305 / BD413 / ADP1)).